A 320-amino-acid chain; its full sequence is tRNA U34 carboxymethyltransferase (320 aa).

Carboxy-S-adenosyl-L-methionine-binding positions include Lys89, Trp103, Lys108, Gly128, 150–152 (DPT), 179–180 (LE), Met194, Tyr198, and Arg313.

Belongs to the class I-like SAM-binding methyltransferase superfamily. CmoB family. In terms of assembly, homotetramer.

The catalysed reaction is carboxy-S-adenosyl-L-methionine + 5-hydroxyuridine(34) in tRNA = 5-carboxymethoxyuridine(34) in tRNA + S-adenosyl-L-homocysteine + H(+). Catalyzes carboxymethyl transfer from carboxy-S-adenosyl-L-methionine (Cx-SAM) to 5-hydroxyuridine (ho5U) to form 5-carboxymethoxyuridine (cmo5U) at position 34 in tRNAs. The sequence is that of tRNA U34 carboxymethyltransferase from Haemophilus ducreyi (strain 35000HP / ATCC 700724).